We begin with the raw amino-acid sequence, 615 residues long: MTIEEKLKLLPEKPGVYIMKDKSGKIIYVGKAVVLKNRVRQYFQNKEKQLPKVKVMLSHVEDFEYIVTDTELEALMLECNLIKKYKPKYNVLLKDDKNYPYIKVTVNEEYPRIMFTRRIEPDGAKYFGPYSSAFAVRETIKLVRKMFPIRTCNKNIEKDMGKVRECLYYHIGLCSAPCTNKINKEDYIKLVDQAVLFLDGKRDWLIQKLKEDMKKAAEELRFEEAARIRDQIFAIERTSEKQKVVSVGEDEQDIISMARSADISCIQVFFVRDGKLSGREHYYMKNTEGMERGEIISSFIKQFYEGAPYIPKEIITDVELDESELLSEWLSQKRGNKVFITIPVRGKKKELVDMVYQNALEALKNDISIREEISKAQVVLELSNLVGLDYAKRIEAYDISNTRGQDNVGSMVVFVDGKPKKSQYRKFNIKYVEGQDDYESMREVIERRFLHAIEEKELIEKGELEEDKAKFAEMPDLIFVDGGIGHVNAVLQVLSGLGISIPVYGMVKDSKHRTRGLVSPQGEIDIPMTSKAFRLIAQIQEEAHRFAITFHKEKQSKRFKSELLNIPGIGEKRAKALYDAFKSIEEIKRASVEDLKKVEGMNEKAAQAVYEYFRK.

The GIY-YIG domain occupies 12–91; the sequence is EKPGVYIMKD…IKKYKPKYNV (80 aa). One can recognise a UVR domain in the interval 203–238; it reads DWLIQKLKEDMKKAAEELRFEEAARIRDQIFAIERT.

Belongs to the UvrC family. Interacts with UvrB in an incision complex.

It is found in the cytoplasm. Functionally, the UvrABC repair system catalyzes the recognition and processing of DNA lesions. UvrC both incises the 5' and 3' sides of the lesion. The N-terminal half is responsible for the 3' incision and the C-terminal half is responsible for the 5' incision. This is UvrABC system protein C from Thermoanaerobacter pseudethanolicus (strain ATCC 33223 / 39E) (Clostridium thermohydrosulfuricum).